Here is a 313-residue protein sequence, read N- to C-terminus: Proline iminopeptidase (313 aa).

The 264-residue stretch at 35–298 (KPVVILHGGP…TPGAGHSAFE (264 aa)) folds into the AB hydrolase-1 domain. The active-site Nucleophile is Ser110. Residue Asp266 is part of the active site. The Proton donor role is filled by His294.

Belongs to the peptidase S33 family.

Its subcellular location is the cytoplasm. It catalyses the reaction Release of N-terminal proline from a peptide.. Functionally, specifically catalyzes the removal of N-terminal proline residues from peptides. The chain is Proline iminopeptidase (pip) from Xylella fastidiosa (strain Temecula1 / ATCC 700964).